The following is a 748-amino-acid chain: Translation factor GUF1 homolog 2, mitochondrial (748 aa).

The N-terminal 29 residues, 1 to 29 (MRVGCCLLLKPLRQRLCTASISSRHIMRW), are a transit peptide targeting the mitochondrion. A tr-type G domain is found at 94-276 (SHIRNVAVVA…AIIERVPPPT (183 aa)). Residues 103–110 (AHVDHGKT), 167–171 (DTPGH), and 221–224 (TKMD) contribute to the GTP site.

Belongs to the TRAFAC class translation factor GTPase superfamily. Classic translation factor GTPase family. LepA subfamily.

Its subcellular location is the mitochondrion inner membrane. The catalysed reaction is GTP + H2O = GDP + phosphate + H(+). Its function is as follows. Promotes mitochondrial protein synthesis. May act as a fidelity factor of the translation reaction, by catalyzing a one-codon backward translocation of tRNAs on improperly translocated ribosomes. Binds to mitochondrial ribosomes in a GTP-dependent manner. The protein is Translation factor GUF1 homolog 2, mitochondrial of Trypanosoma cruzi (strain CL Brener).